A 110-amino-acid polypeptide reads, in one-letter code: Large ribosomal subunit protein uL22 (110 aa).

The protein belongs to the universal ribosomal protein uL22 family. Part of the 50S ribosomal subunit.

Its function is as follows. This protein binds specifically to 23S rRNA; its binding is stimulated by other ribosomal proteins, e.g. L4, L17, and L20. It is important during the early stages of 50S assembly. It makes multiple contacts with different domains of the 23S rRNA in the assembled 50S subunit and ribosome. Functionally, the globular domain of the protein is located near the polypeptide exit tunnel on the outside of the subunit, while an extended beta-hairpin is found that lines the wall of the exit tunnel in the center of the 70S ribosome. The polypeptide is Large ribosomal subunit protein uL22 (Delftia acidovorans (strain DSM 14801 / SPH-1)).